A 430-amino-acid chain; its full sequence is Histidinol dehydrogenase (430 aa).

The substrate site is built by serine 237, glutamine 259, and histidine 262. Glutamine 259 and histidine 262 together coordinate Zn(2+). Active-site proton acceptor residues include glutamate 327 and histidine 328. Substrate is bound by residues histidine 328, aspartate 361, glutamate 415, and histidine 420. Residue aspartate 361 coordinates Zn(2+). Histidine 420 lines the Zn(2+) pocket.

Belongs to the histidinol dehydrogenase family. Zn(2+) serves as cofactor.

It catalyses the reaction L-histidinol + 2 NAD(+) + H2O = L-histidine + 2 NADH + 3 H(+). The protein operates within amino-acid biosynthesis; L-histidine biosynthesis; L-histidine from 5-phospho-alpha-D-ribose 1-diphosphate: step 9/9. Functionally, catalyzes the sequential NAD-dependent oxidations of L-histidinol to L-histidinaldehyde and then to L-histidine. This chain is Histidinol dehydrogenase, found in Mesorhizobium japonicum (strain LMG 29417 / CECT 9101 / MAFF 303099) (Mesorhizobium loti (strain MAFF 303099)).